Consider the following 334-residue polypeptide: MSFNLRNRSLLTVQDYTPREFRYLVDLARDLKRAKYARTEQEHLKGKEICLIFEKTSTRTRCAFEVACSDQGANVTYLDPAGSQIGHKESFKDTARVLGRMYDAIEYRGASQAGVETLAKYAGVPVYNGLTDEYHPTQMIADVMTMREHSDKPISEIKYAYIGDTRSNMGHSLLIVGCLMGMDVRICGPRSLWPSEEYQTIAKRLKAQSGARLMITDNPREAVEGVDFIHTDVWVSMGEPKEVWKERIQLLTPYQVNAELMAASGNPQTKFMHCLPAYHDTETTIGKQISDDYGMSDGLEVTDEVFESQANIAFEQAENRMHTIKALLVATLGD.

Carbamoyl phosphate-binding positions include 57-60 (STRT), glutamine 84, arginine 108, and 135-138 (HPTQ). L-ornithine is bound by residues asparagine 168, aspartate 232, and 236 to 237 (SM). Carbamoyl phosphate-binding positions include 274–275 (CL) and arginine 320.

Belongs to the aspartate/ornithine carbamoyltransferase superfamily. OTCase family.

The protein resides in the cytoplasm. The enzyme catalyses carbamoyl phosphate + L-ornithine = L-citrulline + phosphate + H(+). It participates in amino-acid degradation; L-arginine degradation via ADI pathway; carbamoyl phosphate from L-arginine: step 2/2. Its function is as follows. Reversibly catalyzes the transfer of the carbamoyl group from carbamoyl phosphate (CP) to the N(epsilon) atom of ornithine (ORN) to produce L-citrulline. The polypeptide is Ornithine carbamoyltransferase, catabolic (arcB) (Rhizobium meliloti (strain 1021) (Ensifer meliloti)).